We begin with the raw amino-acid sequence, 244 residues long: Phosphoadenosine 5'-phosphosulfate reductase (244 aa).

Cys-239 functions as the Nucleophile; cysteine thiosulfonate intermediate in the catalytic mechanism.

The protein belongs to the PAPS reductase family. CysH subfamily.

The protein resides in the cytoplasm. It catalyses the reaction [thioredoxin]-disulfide + sulfite + adenosine 3',5'-bisphosphate + 2 H(+) = [thioredoxin]-dithiol + 3'-phosphoadenylyl sulfate. It functions in the pathway sulfur metabolism; hydrogen sulfide biosynthesis; sulfite from sulfate: step 3/3. Functionally, catalyzes the formation of sulfite from phosphoadenosine 5'-phosphosulfate (PAPS) using thioredoxin as an electron donor. This is Phosphoadenosine 5'-phosphosulfate reductase from Escherichia coli O81 (strain ED1a).